Here is a 412-residue protein sequence, read N- to C-terminus: Alpha-2,8-sialyltransferase 8E (412 aa).

Residues 1–16 (MRYADPSANRDLLGNR) lie on the Cytoplasmic side of the membrane. A helical; Signal-anchor for type II membrane protein transmembrane segment spans residues 17 to 37 (TLLFIFICAFALVTLLQQILY). Topologically, residues 38 to 412 (SKSYIKRGFQ…RVHTGTCNCC (375 aa)) are lumenal. N-linked (GlcNAc...) asparagine glycans are attached at residues asparagine 58, asparagine 64, asparagine 73, and asparagine 92. Intrachain disulfides connect cysteine 200-cysteine 349 and cysteine 214-cysteine 409. Residues asparagine 228 and 250 to 252 (NPS) each bind substrate. Asparagine 277 carries N-linked (GlcNAc...) asparagine glycosylation. Substrate is bound at residue 336–338 (STG). Histidine 384 acts as the Proton donor/acceptor in catalysis.

This sequence belongs to the glycosyltransferase 29 family. In terms of tissue distribution, highly expressed in brain. Expressed at low levels in other tissues, including liver, testis, lung, placenta and spleen.

It is found in the golgi apparatus membrane. It catalyses the reaction a ganglioside GT1b (d18:1(4E)) + CMP-N-acetyl-beta-neuraminate = a ganglioside GQ1b (d18:1(4E)) + CMP + H(+). It carries out the reaction a ganglioside GD3 (d18:1(4E)) + CMP-N-acetyl-beta-neuraminate = a ganglioside GT3 (d18:1(4E)) + CMP + H(+). The catalysed reaction is a ganglioside GD1a (d18:1(4E)) + CMP-N-acetyl-beta-neuraminate = a ganglioside GT1a (d18:1(4E)) + CMP + H(+). The enzyme catalyses a ganglioside GM1b (d18:1(4E)) + CMP-N-acetyl-beta-neuraminate = a ganglioside GD1c (d18:1(4E)) + CMP + H(+). It catalyses the reaction a ganglioside GQ1c (d18:1(4E)) + CMP-N-acetyl-beta-neuraminate = a ganglioside GP1c (d18:1(4E)) + CMP + H(+). Its pathway is protein modification; protein glycosylation. Functionally, involved in the synthesis of gangliosides GD1c, GT1a, GQ1b, GP1c and GT3 from GD1a, GT1b, GM1b and GD3 respectively. The chain is Alpha-2,8-sialyltransferase 8E from Mus musculus (Mouse).